A 278-amino-acid polypeptide reads, in one-letter code: HTH-type transcriptional activator RhaS (278 aa).

Residues 174 to 272 (NHLIAWLEDH…GWSPREIRQG (99 aa)) form the HTH araC/xylS-type domain. 2 DNA-binding regions (H-T-H motif) span residues 191-212 (EAIA…KQHT) and 239-262 (VTHI…RREF).

As to quaternary structure, binds DNA as a dimer.

Its subcellular location is the cytoplasm. Activates expression of the rhaBAD and rhaT operons. The chain is HTH-type transcriptional activator RhaS from Escherichia fergusonii (strain ATCC 35469 / DSM 13698 / CCUG 18766 / IAM 14443 / JCM 21226 / LMG 7866 / NBRC 102419 / NCTC 12128 / CDC 0568-73).